A 249-amino-acid chain; its full sequence is Ditrans,polycis-undecaprenyl-diphosphate synthase ((2E,6E)-farnesyl-diphosphate specific) (249 aa).

Aspartate 26 is a catalytic residue. Residue aspartate 26 coordinates Mg(2+). Residues 27–30 (GNGR), tryptophan 31, arginine 39, histidine 43, and 71–73 (SRE) contribute to the substrate site. Asparagine 74 functions as the Proton acceptor in the catalytic mechanism. Substrate contacts are provided by residues tryptophan 75, arginine 77, arginine 194, and 200-202 (RIS). A Mg(2+)-binding site is contributed by glutamate 213.

This sequence belongs to the UPP synthase family. Homodimer. It depends on Mg(2+) as a cofactor.

It catalyses the reaction 8 isopentenyl diphosphate + (2E,6E)-farnesyl diphosphate = di-trans,octa-cis-undecaprenyl diphosphate + 8 diphosphate. Catalyzes the sequential condensation of isopentenyl diphosphate (IPP) with (2E,6E)-farnesyl diphosphate (E,E-FPP) to yield (2Z,6Z,10Z,14Z,18Z,22Z,26Z,30Z,34E,38E)-undecaprenyl diphosphate (di-trans,octa-cis-UPP). UPP is the precursor of glycosyl carrier lipid in the biosynthesis of bacterial cell wall polysaccharide components such as peptidoglycan and lipopolysaccharide. The protein is Ditrans,polycis-undecaprenyl-diphosphate synthase ((2E,6E)-farnesyl-diphosphate specific) of Buchnera aphidicola subsp. Schizaphis graminum (strain Sg).